Here is a 547-residue protein sequence, read N- to C-terminus: MAKMIAFDEEARRGLEKGLNTLADAVKVTLGPKGRNVVLERKWGAPTITNDGVTIAREIELEDPYEKIGAELVKEVAKKTDDVAGDGTTTATVLAQSLVREGLRNVAAGSNPMGIKRGIQAGVEKITAELLSHAKEIETQEQIAATAGISAADEKIGELIAEAMYKVGDGKLNKDGVITVEESNAFGVNLEVTEGMRFDKGYISGYFATDVERGEAVLEDPYILLVSSKISNVKDLLPLLEKVMQSGKPLLIVAEDIEGEALSTLVVNKIRGTFKSVAVKAPGFGDRRKAQLQDIAILTGGQVIAEEVGLSLETADLPMLGTARKVVVTKDDTTIVDGAGSAEQLAGRIKQIRQEIENADSDYDAEKLQERLAKLSGGVAVLQVGAATEVELKERKHRIEDAVRNAKAAAEEGIVAGGGAALLQTASVLDDNLGLEGDEATGVQIVRAALAAPLKQIAHNAGLEPGVVVDKVANLPVGEGLNAATGEYVDLLGAGISDPVKVTRSALQNAASIAALFLTTEAVVADKPEPEAPAMPGADEMGGMGGF.

ATP is bound by residues 29-32 (TLGP), 86-90 (DGTTT), glycine 418, 482-484 (NAA), and aspartate 498.

This sequence belongs to the chaperonin (HSP60) family. Forms a cylinder of 14 subunits composed of two heptameric rings stacked back-to-back. Interacts with the co-chaperonin GroES.

It is found in the cytoplasm. It catalyses the reaction ATP + H2O + a folded polypeptide = ADP + phosphate + an unfolded polypeptide.. Together with its co-chaperonin GroES, plays an essential role in assisting protein folding. The GroEL-GroES system forms a nano-cage that allows encapsulation of the non-native substrate proteins and provides a physical environment optimized to promote and accelerate protein folding. This is Chaperonin GroEL 1 from Corynebacterium jeikeium (strain K411).